An 88-amino-acid polypeptide reads, in one-letter code: U24 protein (88 aa).

Thr-6 carries the phosphothreonine modification. A PPXY motif motif is present at residues 8-11 (PPSY). Residues 58–78 (FAFLVLTGLAIAMILFIAFVI) traverse the membrane as a helical segment.

Interacts with host ITCH; this interaction probably mediates ITCH degradation. Interacts probably with NEDD4.

It localises to the membrane. In terms of biological role, down-regulates the TCR/CD3E complex and the transferrin receptor TFRC in host T-cells by blocking them from recycling back to the cell surface. The sequence is that of U24 protein (U24) from Human herpesvirus 6B (strain Z29) (HHV-6 variant B).